We begin with the raw amino-acid sequence, 312 residues long: Aspartate carbamoyltransferase catalytic subunit (312 aa).

Carbamoyl phosphate-binding residues include R62 and T63. K90 provides a ligand contact to L-aspartate. 3 residues coordinate carbamoyl phosphate: R112, H140, and Q143. 2 residues coordinate L-aspartate: R173 and R228. 2 residues coordinate carbamoyl phosphate: G269 and P270.

Belongs to the aspartate/ornithine carbamoyltransferase superfamily. ATCase family. In terms of assembly, heterododecamer (2C3:3R2) of six catalytic PyrB chains organized as two trimers (C3), and six regulatory PyrI chains organized as three dimers (R2).

It carries out the reaction carbamoyl phosphate + L-aspartate = N-carbamoyl-L-aspartate + phosphate + H(+). The protein operates within pyrimidine metabolism; UMP biosynthesis via de novo pathway; (S)-dihydroorotate from bicarbonate: step 2/3. Functionally, catalyzes the condensation of carbamoyl phosphate and aspartate to form carbamoyl aspartate and inorganic phosphate, the committed step in the de novo pyrimidine nucleotide biosynthesis pathway. In Deinococcus geothermalis (strain DSM 11300 / CIP 105573 / AG-3a), this protein is Aspartate carbamoyltransferase catalytic subunit.